The chain runs to 61 residues: Small ribosomal subunit protein uS14 (61 aa).

C24, C27, C40, and C43 together coordinate Zn(2+).

The protein belongs to the universal ribosomal protein uS14 family. Zinc-binding uS14 subfamily. As to quaternary structure, part of the 30S ribosomal subunit. Contacts proteins S3 and S10. The cofactor is Zn(2+).

Its function is as follows. Binds 16S rRNA, required for the assembly of 30S particles and may also be responsible for determining the conformation of the 16S rRNA at the A site. This is Small ribosomal subunit protein uS14 from Helicobacter pylori (strain G27).